A 198-amino-acid chain; its full sequence is Dual specificity protein phosphatase 14 (198 aa).

The Tyrosine-protein phosphatase domain maps to 26–167; the sequence is GIAQITSSLF…LIDYERQLFG (142 aa). Residue Cys111 is the Phosphocysteine intermediate of the active site.

Belongs to the protein-tyrosine phosphatase family. Non-receptor class dual specificity subfamily. Interacts with CD28.

The catalysed reaction is O-phospho-L-tyrosyl-[protein] + H2O = L-tyrosyl-[protein] + phosphate. It carries out the reaction O-phospho-L-seryl-[protein] + H2O = L-seryl-[protein] + phosphate. It catalyses the reaction O-phospho-L-threonyl-[protein] + H2O = L-threonyl-[protein] + phosphate. Its function is as follows. Involved in the inactivation of MAP kinases. Dephosphorylates ERK, JNK and p38 MAP-kinases. Plays a negative role in TCR signaling by dephosphorylating MAP3K7 adapter TAB1 leading to its inactivation. The protein is Dual specificity protein phosphatase 14 (DUSP14) of Homo sapiens (Human).